A 216-amino-acid chain; its full sequence is Octanoyltransferase (216 aa).

The region spanning 30–204 (KNNINEIWLL…NCKKFLMMNN (175 aa)) is the BPL/LPL catalytic domain. Substrate is bound by residues 68–75 (RGGHMTFH), 135–137 (SIG), and 148–150 (GLA). The active-site Acyl-thioester intermediate is cysteine 166.

This sequence belongs to the LipB family.

It is found in the cytoplasm. The catalysed reaction is octanoyl-[ACP] + L-lysyl-[protein] = N(6)-octanoyl-L-lysyl-[protein] + holo-[ACP] + H(+). Its pathway is protein modification; protein lipoylation via endogenous pathway; protein N(6)-(lipoyl)lysine from octanoyl-[acyl-carrier-protein]: step 1/2. Functionally, catalyzes the transfer of endogenously produced octanoic acid from octanoyl-acyl-carrier-protein onto the lipoyl domains of lipoate-dependent enzymes. Lipoyl-ACP can also act as a substrate although octanoyl-ACP is likely to be the physiological substrate. This chain is Octanoyltransferase, found in Wigglesworthia glossinidia brevipalpis.